We begin with the raw amino-acid sequence, 237 residues long: tRNA (guanine-N(7)-)-methyltransferase (237 aa).

Residues D35, E60, N87, and D113 each contribute to the S-adenosyl-L-methionine site. D113 is an active-site residue. Positions 117 and 149 each coordinate substrate.

This sequence belongs to the class I-like SAM-binding methyltransferase superfamily. TrmB family.

The enzyme catalyses guanosine(46) in tRNA + S-adenosyl-L-methionine = N(7)-methylguanosine(46) in tRNA + S-adenosyl-L-homocysteine. It functions in the pathway tRNA modification; N(7)-methylguanine-tRNA biosynthesis. Catalyzes the formation of N(7)-methylguanine at position 46 (m7G46) in tRNA. This Synechococcus sp. (strain CC9311) protein is tRNA (guanine-N(7)-)-methyltransferase.